A 126-amino-acid chain; its full sequence is MPEPAKSAPAPKKGSKKAVTKAQKKDGKKRKRSCKESYSIYVYKVLKQVHPDTGISSKAMGIMNSFVNDIFERIAGEASRLAHYNKRSTITSREIQTAVRLLLPGELAKHAVSEGTKAVTKYTSSK.

The segment covering 1-12 has biased composition (low complexity); it reads MPEPAKSAPAPK. Positions 1-32 are disordered; the sequence is MPEPAKSAPAPKKGSKKAVTKAQKKDGKKRKR. Residue Pro2 is modified to N-acetylproline. ADP-ribosyl glutamic acid is present on Glu3. At Lys6 the chain carries N6-(2-hydroxyisobutyryl)lysine; alternate. An N6-(beta-hydroxybutyryl)lysine; alternate modification is found at Lys6. Lys6 carries the post-translational modification N6-acetyllysine; alternate. Lys6 is modified (N6-butyryllysine; alternate). Residue Lys6 is modified to N6-crotonyllysine; alternate. Lys6 is subject to N6-lactoyllysine; alternate. A Glycyl lysine isopeptide (Lys-Gly) (interchain with G-Cter in SUMO2); alternate cross-link involves residue Lys6. Ser7 carries the ADP-ribosylserine modification. Lys12 bears the N6-(beta-hydroxybutyryl)lysine; alternate mark. N6-acetyllysine; alternate occurs at positions 12 and 13. An N6-crotonyllysine; alternate mark is found at Lys12 and Lys13. At Lys12 the chain carries N6-lactoyllysine; alternate. Position 13 is an N6-(2-hydroxyisobutyryl)lysine; alternate (Lys13). Ser15 is modified (phosphoserine; by STK4/MST1). Residues Lys16, Lys17, Lys21, and Lys24 each carry the N6-acetyllysine; alternate modification. N6-crotonyllysine; alternate is present on residues Lys16, Lys17, Lys21, and Lys24. 4 positions are modified to N6-lactoyllysine; alternate: Lys16, Lys17, Lys21, and Lys24. N6-glutaryllysine; alternate is present on Lys17. Lys21 and Lys24 each carry N6-(2-hydroxyisobutyryl)lysine; alternate. The residue at position 21 (Lys21) is an N6-(beta-hydroxybutyryl)lysine; alternate. Position 21 is an N6-butyryllysine; alternate (Lys21). A Glycyl lysine isopeptide (Lys-Gly) (interchain with G-Cter in SUMO2); alternate cross-link involves residue Lys21. Position 25 is an N6-(2-hydroxyisobutyryl)lysine (Lys25). At Lys35 the chain carries N6-(2-hydroxyisobutyryl)lysine; alternate. Lys35 bears the N6-(beta-hydroxybutyryl)lysine; alternate mark. Lys35 carries the N6-crotonyllysine; alternate modification. Lys35 is modified (N6-glutaryllysine; alternate). Lys35 is subject to N6-succinyllysine; alternate. A Glycyl lysine isopeptide (Lys-Gly) (interchain with G-Cter in ubiquitin); alternate cross-link involves residue Lys35. Glu36 is modified (polyADP-ribosyl glutamic acid). Ser37 bears the Phosphoserine; by AMPK mark. Residues Lys44, Lys47, and Lys58 each carry the N6-(2-hydroxyisobutyryl)lysine; alternate modification. Residue Lys44 is modified to N6-lactoyllysine; alternate. 2 positions are modified to N6-glutaryllysine; alternate: Lys44 and Lys47. Position 47 is an N6-methyllysine; alternate (Lys47). The residue at position 58 (Lys58) is an N6,N6-dimethyllysine; alternate. Arg80 is modified (dimethylated arginine). Lys86 bears the N6-(2-hydroxyisobutyryl)lysine; alternate mark. At Lys86 the chain carries N6-acetyllysine; alternate. Lys86 is modified (N6-lactoyllysine; alternate). Lys86 bears the N6,N6,N6-trimethyllysine; alternate mark. 2 positions are modified to omega-N-methylarginine: Arg87 and Arg93. Lys109 carries the N6-(2-hydroxyisobutyryl)lysine; alternate modification. Lys109 is subject to N6-lactoyllysine; alternate. Lys109 carries the N6-glutaryllysine; alternate modification. Lys109 is subject to N6-methyllysine; alternate. The O-linked (GlcNAc) serine glycan is linked to Ser113. Residue Thr116 is modified to Phosphothreonine. N6-(2-hydroxyisobutyryl)lysine; alternate occurs at positions 117 and 121. N6-(beta-hydroxybutyryl)lysine; alternate is present on Lys117. Lys117 and Lys121 each carry N6-lactoyllysine; alternate. N6-glutaryllysine; alternate occurs at positions 117 and 121. An N6-succinyllysine; alternate mark is found at Lys117 and Lys121. The residue at position 117 (Lys117) is an N6-methylated lysine; alternate. Residue Lys121 forms a Glycyl lysine isopeptide (Lys-Gly) (interchain with G-Cter in ubiquitin); alternate linkage.

It belongs to the histone H2B family. The nucleosome is a histone octamer containing two molecules each of H2A, H2B, H3 and H4 assembled in one H3-H4 heterotetramer and two H2A-H2B heterodimers. The octamer wraps approximately 147 bp of DNA. In terms of processing, monoubiquitination at Lys-35 (H2BK34Ub) by the MSL1/MSL2 dimer is required for histone H3 'Lys-4' (H3K4me) and 'Lys-79' (H3K79me) methylation and transcription activation at specific gene loci, such as HOXA9 and MEIS1 loci. Similarly, monoubiquitination at Lys-121 (H2BK120Ub) by the RNF20/40 complex gives a specific tag for epigenetic transcriptional activation and is also prerequisite for histone H3 'Lys-4' and 'Lys-79' methylation. It also functions cooperatively with the FACT dimer to stimulate elongation by RNA polymerase II. H2BK120Ub also acts as a regulator of mRNA splicing: deubiquitination by USP49 is required for efficient cotranscriptional splicing of a large set of exons. Phosphorylated on Ser-15 (H2BS14ph) by STK4/MST1 during apoptosis; which facilitates apoptotic chromatin condensation. Also phosphorylated on Ser-15 in response to DNA double strand breaks (DSBs), and in correlation with somatic hypermutation and immunoglobulin class-switch recombination. Phosphorylation at Ser-37 (H2BS36ph) by AMPK in response to stress promotes transcription. Post-translationally, ADP-ribosylated by PARP1 or PARP2 on Ser-7 (H2BS6ADPr) in response to DNA damage. H2BS6ADPr promotes recruitment of CHD1L. Mono-ADP-ribosylated on Glu-3 (H2BE2ADPr) by PARP3 in response to single-strand breaks. Poly ADP-ribosylation on Glu-36 (H2BE35ADPr) by PARP1 regulates adipogenesis: it inhibits phosphorylation at Ser-37 (H2BS36ph), thereby blocking expression of pro-adipogenetic genes. In terms of processing, crotonylation (Kcr) is specifically present in male germ cells and marks testis-specific genes in post-meiotic cells, including X-linked genes that escape sex chromosome inactivation in haploid cells. Crotonylation marks active promoters and enhancers and confers resistance to transcriptional repressors. It is also associated with post-meiotically activated genes on autosomes. GlcNAcylation at Ser-113 promotes monoubiquitination of Lys-121. It fluctuates in response to extracellular glucose, and associates with transcribed genes. Post-translationally, lactylated in macrophages by EP300/P300 by using lactoyl-CoA directly derived from endogenous or exogenous lactate, leading to stimulates gene transcription.

Its subcellular location is the nucleus. It is found in the chromosome. Its function is as follows. Core component of nucleosome. Nucleosomes wrap and compact DNA into chromatin, limiting DNA accessibility to the cellular machineries which require DNA as a template. Histones thereby play a central role in transcription regulation, DNA repair, DNA replication and chromosomal stability. DNA accessibility is regulated via a complex set of post-translational modifications of histones, also called histone code, and nucleosome remodeling. In terms of biological role, has broad antibacterial activity. May contribute to the formation of the functional antimicrobial barrier of the colonic epithelium, and to the bactericidal activity of amniotic fluid. This is Histone H2B type 2-E from Pongo abelii (Sumatran orangutan).